The sequence spans 611 residues: Large ribosomal subunit assembly factor BipA (611 aa).

One can recognise a tr-type G domain in the interval 7–202; it reads KNLRNIAIIA…AIVKYTPPPT (196 aa). GTP-binding positions include 19–24 and 132–135; these read DHGKTT and NKID.

Belongs to the TRAFAC class translation factor GTPase superfamily. Classic translation factor GTPase family. BipA subfamily. As to quaternary structure, monomer.

Its subcellular location is the cytoplasm. It carries out the reaction GTP + H2O = GDP + phosphate + H(+). A 50S ribosomal subunit assembly protein with GTPase activity, required for 50S subunit assembly at low temperatures, may also play a role in translation. Binds GTP and analogs. Binds the 70S ribosome between the 30S and 50S subunits, in a similar position as ribosome-bound EF-G; it contacts a number of ribosomal proteins, both rRNAs and the A-site tRNA. This is Large ribosomal subunit assembly factor BipA from Buchnera aphidicola subsp. Baizongia pistaciae (strain Bp).